A 115-amino-acid chain; its full sequence is Parathyroid hormone (115 aa).

Positions 1-25 are cleaved as a signal peptide; it reads MMSAKDMVKVMIVMLAICFLARSDG. Positions 26-31 are excised as a propeptide; that stretch reads KSVKKR. An important for receptor binding region spans residues 51–69; sequence RVEWLRKKLQDVHNFVALG. The interval 77-99 is disordered; sequence GSSQRPRKKEDNVLVESHQKSLG. A compositionally biased stretch (basic and acidic residues) spans 84–99; the sequence is KKEDNVLVESHQKSLG.

This sequence belongs to the parathyroid hormone family. Interacts with PTH1R (via N-terminal extracellular domain).

Its subcellular location is the secreted. In terms of biological role, parathyroid hormone elevates calcium level by dissolving the salts in bone and preventing their renal excretion. Acts by binding to its receptor, PTH1R, activating G protein-coupled receptor signaling. Stimulates [1-14C]-2-deoxy-D-glucose (2DG) transport and glycogen synthesis in osteoblastic cells. The protein is Parathyroid hormone of Bos taurus (Bovine).